The following is a 1059-amino-acid chain: Ubiquitin carboxyl-terminal hydrolase 36 (1059 aa).

Disordered regions lie at residues 22 to 45 and 102 to 145; these read LGGN…NGSL and GKLV…KPKR. Residues 23 to 45 show a composition bias toward polar residues; the sequence is GGNSSAGSSTDQAKSGEDTNGSL. The span at 121–138 shows a compositional bias: low complexity; sequence HPNNQSHHNHPHPTSNPN. Positions 168–457 constitute a USP domain; it reads TGMINVGNTC…NAYIMFFELD (290 aa). The active-site Nucleophile is Cys-177. The Proton acceptor role is filled by His-416. Disordered stretches follow at residues 464 to 512, 554 to 853, 941 to 1005, and 1022 to 1059; these read PPAN…YTNG, ATSA…VTSN, RQRD…FYNQ, and FGGA…QQQT. Low complexity-rich tracts occupy residues 479–494 and 561–580; these read STTP…PSPT and NGNK…KSIN. Residues Ser-490 and Ser-492 each carry the phosphoserine modification. A compositionally biased stretch (polar residues) spans 603-615; it reads TTAQLPSMPNMTE. Phosphothreonine occurs at positions 632 and 636. 2 positions are modified to phosphoserine: Ser-646 and Ser-648. The segment covering 673–702 has biased composition (polar residues); the sequence is ESGQTNGHSKTNGSLTNGSASSSVHVNNSK. Residues 703 to 720 are compositionally biased toward basic and acidic residues; that stretch reads QKTDAIDEIFKSLKKSAD. Position 721 is a phosphoserine (Ser-721). Positions 721 to 730 are enriched in acidic residues; it reads SEEDDDEEEP. Positions 740–750 are enriched in low complexity; that stretch reads PQKQSQSQSKA. Over residues 751-760 the composition is skewed to pro residues; that stretch reads PPSPKTPPSP. Ser-753 carries the phosphoserine modification. The residue at position 756 (Thr-756) is a Phosphothreonine. Ser-759 bears the Phosphoserine mark. Residues 779 to 788 are compositionally biased toward acidic residues; sequence DAIDDDDDAV. Phosphothreonine is present on Thr-799. The segment covering 806–818 has biased composition (polar residues); it reads NPFSSSKPSTDSP. A Phosphoserine modification is found at Ser-817. At Thr-820 the chain carries Phosphothreonine. Residues 833–853 are compositionally biased toward polar residues; that stretch reads ALKSHQQPRVGNGYQSNVTSN. Over residues 963–974 the composition is skewed to low complexity; that stretch reads SGSAKGNNASNS.

The protein belongs to the peptidase C19 family. In terms of assembly, interacts with atms/PAF1, but not with CycT.

The protein resides in the nucleus. Its subcellular location is the nucleolus. The catalysed reaction is Thiol-dependent hydrolysis of ester, thioester, amide, peptide and isopeptide bonds formed by the C-terminal Gly of ubiquitin (a 76-residue protein attached to proteins as an intracellular targeting signal).. In terms of biological role, required for maintaining multiple types of adult stem cells, including male and female germline, epithelial follicle cell and intestinal stem cells. May function as a transcriptional repressor by continually deubiquiting histone H2B at the promoters of genes critical for cellular differentiation, thereby preventing histone H3 'Lys-4' trimethylation (H3K4). Controls selective autophagy activation by ubiquitinated proteins. The protein is Ubiquitin carboxyl-terminal hydrolase 36 (Usp36) of Drosophila sechellia (Fruit fly).